A 339-amino-acid chain; its full sequence is Ketol-acid reductoisomerase (NADP(+)) (339 aa).

One can recognise a KARI N-terminal Rossmann domain in the interval M1–T182. Residues Y24–Q27, R48, S51, S53, and D83–Q86 each bind NADP(+). Residue H108 is part of the active site. G134 contacts NADP(+). Residues T183–I328 enclose the KARI C-terminal knotted domain. Mg(2+)-binding residues include D191, E195, E227, and E231. S252 is a substrate binding site.

It belongs to the ketol-acid reductoisomerase family. Mg(2+) is required as a cofactor.

The enzyme catalyses (2R)-2,3-dihydroxy-3-methylbutanoate + NADP(+) = (2S)-2-acetolactate + NADPH + H(+). The catalysed reaction is (2R,3R)-2,3-dihydroxy-3-methylpentanoate + NADP(+) = (S)-2-ethyl-2-hydroxy-3-oxobutanoate + NADPH + H(+). It functions in the pathway amino-acid biosynthesis; L-isoleucine biosynthesis; L-isoleucine from 2-oxobutanoate: step 2/4. Its pathway is amino-acid biosynthesis; L-valine biosynthesis; L-valine from pyruvate: step 2/4. In terms of biological role, involved in the biosynthesis of branched-chain amino acids (BCAA). Catalyzes an alkyl-migration followed by a ketol-acid reduction of (S)-2-acetolactate (S2AL) to yield (R)-2,3-dihydroxy-isovalerate. In the isomerase reaction, S2AL is rearranged via a Mg-dependent methyl migration to produce 3-hydroxy-3-methyl-2-ketobutyrate (HMKB). In the reductase reaction, this 2-ketoacid undergoes a metal-dependent reduction by NADPH to yield (R)-2,3-dihydroxy-isovalerate. The sequence is that of Ketol-acid reductoisomerase (NADP(+)) from Magnetospirillum molischianum (Rhodospirillum molischianum).